The chain runs to 293 residues: 1D-myo-inositol 2-acetamido-2-deoxy-alpha-D-glucopyranoside deacetylase (293 aa).

Positions 15, 18, and 148 each coordinate Zn(2+).

The protein belongs to the MshB deacetylase family. It depends on Zn(2+) as a cofactor.

The enzyme catalyses 1D-myo-inositol 2-acetamido-2-deoxy-alpha-D-glucopyranoside + H2O = 1D-myo-inositol 2-amino-2-deoxy-alpha-D-glucopyranoside + acetate. In terms of biological role, catalyzes the deacetylation of 1D-myo-inositol 2-acetamido-2-deoxy-alpha-D-glucopyranoside (GlcNAc-Ins) in the mycothiol biosynthesis pathway. This chain is 1D-myo-inositol 2-acetamido-2-deoxy-alpha-D-glucopyranoside deacetylase, found in Corynebacterium diphtheriae (strain ATCC 700971 / NCTC 13129 / Biotype gravis).